The primary structure comprises 241 residues: Large ribosomal subunit protein uL30 (241 aa).

The tract at residues 1–32 is disordered; sequence MATTLKPETLQKKEKAQQKTAEERAAAKKVRK. Residues 9–26 are compositionally biased toward basic and acidic residues; that stretch reads TLQKKEKAQQKTAEERAA.

The protein belongs to the universal ribosomal protein uL30 family. As to quaternary structure, component of the large ribosomal subunit. Mature ribosomes consist of a small (40S) and a large (60S) subunit. The 40S subunit contains about 32 different proteins and 1 molecule of RNA (18S). The 60S subunit contains 45 different proteins and 3 molecules of RNA (25S, 5.8S and 5S).

The protein resides in the cytoplasm. Functionally, component of the ribosome, a large ribonucleoprotein complex responsible for the synthesis of proteins in the cell. The small ribosomal subunit (SSU) binds messenger RNAs (mRNAs) and translates the encoded message by selecting cognate aminoacyl-transfer RNA (tRNA) molecules. The large subunit (LSU) contains the ribosomal catalytic site termed the peptidyl transferase center (PTC), which catalyzes the formation of peptide bonds, thereby polymerizing the amino acids delivered by tRNAs into a polypeptide chain. The nascent polypeptides leave the ribosome through a tunnel in the LSU and interact with protein factors that function in enzymatic processing, targeting, and the membrane insertion of nascent chains at the exit of the ribosomal tunnel. The chain is Large ribosomal subunit protein uL30 from Candida albicans (strain SC5314 / ATCC MYA-2876) (Yeast).